The chain runs to 260 residues: 14-3-3-like protein GF14-F (260 aa).

The segment at 241–260 is disordered; the sequence is NAEDGGDEIKEAAKPEGEGH. Residues 247–260 show a composition bias toward basic and acidic residues; the sequence is DEIKEAAKPEGEGH.

This sequence belongs to the 14-3-3 family. May form a complex with the transcriptional activator VP1 and the bZIP transcription factor EMBP1. Expressed in seedlings, roots and panicles and at lower levels in flag leaves and internodes.

The protein resides in the cytoplasm. The protein localises to the nucleus. Its function is as follows. Is associated with a DNA binding complex that binds to the G box, a well-characterized cis-acting DNA regulatory element found in plant genes. This is 14-3-3-like protein GF14-F (GF14F) from Oryza sativa subsp. japonica (Rice).